Here is a 242-residue protein sequence, read N- to C-terminus: Lactate utilization protein A 2 (242 aa).

This sequence belongs to the LutA/YkgE family.

Functionally, is involved in L-lactate degradation and allows cells to grow with lactate as the sole carbon source. The chain is Lactate utilization protein A 2 from Bacillus cereus (strain ZK / E33L).